Here is a 496-residue protein sequence, read N- to C-terminus: Cobyric acid synthase (496 aa).

One can recognise a GATase cobBQ-type domain in the interval 252–442; sequence DLAVAVIRLP…LHGCFDSDTY (191 aa). Cys-333 functions as the Nucleophile in the catalytic mechanism. The active site involves His-434.

This sequence belongs to the CobB/CobQ family. CobQ subfamily.

It participates in cofactor biosynthesis; adenosylcobalamin biosynthesis. In terms of biological role, catalyzes amidations at positions B, D, E, and G on adenosylcobyrinic A,C-diamide. NH(2) groups are provided by glutamine, and one molecule of ATP is hydrogenolyzed for each amidation. The protein is Cobyric acid synthase of Desulforudis audaxviator (strain MP104C).